Consider the following 353-residue polypeptide: Putative actin-28 (353 aa).

This sequence belongs to the actin family.

It localises to the cytoplasm. It is found in the cytoskeleton. The catalysed reaction is ATP + H2O = ADP + phosphate + H(+). In terms of biological role, actins are highly conserved proteins that are involved in various types of cell motility and are ubiquitously expressed in all eukaryotic cells. Multiple isoforms are involved in various cellular functions such as cytoskeleton structure, cell mobility, chromosome movement and muscle contraction. This is Putative actin-28 (act28) from Dictyostelium discoideum (Social amoeba).